A 686-amino-acid polypeptide reads, in one-letter code: Protein SDA1 homolog (686 aa).

Residues S232, S234, and S236 each carry the phosphoserine modification. Residues 254-315 (KKGSKNKKKL…SCKERFEVKM (62 aa)) are a coiled coil. The interval 484–508 (LEKEENTENDEDGWESASLSEEEED) is disordered. A compositionally biased stretch (acidic residues) spans 490–508 (TENDEDGWESASLSEEEED). Phosphothreonine is present on T551. The segment at 563–586 (MKKEMDAAPGKAQKRKYLDMDSDE) is disordered. A phosphoserine mark is found at S584, S588, and S594. The tract at residues 604 to 649 (KPKSDKETRLATAMAGRTDRKEFVRKKTKINPFSSSTNKEKKKQKN) is disordered.

Belongs to the SDA1 family.

It localises to the nucleus. It is found in the nucleolus. Its function is as follows. Required for 60S pre-ribosomal subunits export to the cytoplasm. The polypeptide is Protein SDA1 homolog (Sdad1) (Rattus norvegicus (Rat)).